Consider the following 440-residue polypeptide: FAD-dependent monooxygenase FVEG_08293 (440 aa).

A helical transmembrane segment spans residues 7–26; sequence EFNVAIVGAGVAGLALAMAL. Glu-37 and Gly-50 together coordinate FAD. N-linked (GlcNAc...) asparagine glycosylation occurs at Asn-77. Residue Arg-122 participates in FAD binding. Residues Arg-203 and Tyr-235 contribute to the active site. FAD-binding residues include Asp-317 and Ala-330.

The protein belongs to the paxM FAD-dependent monooxygenase family. The cofactor is FAD.

It localises to the membrane. In terms of biological role, FAD-dependent monooxygenase; part of the Fusarium detoxification of benzoxazolinone cluster 1 (FDB1) involved in the degradation of benzoxazolinones produced by the host plant. Maize, wheat, and rye produce the 2 benzoxazinone phytoanticipins 2,4-dihy-droxy-7-methoxy-1,4-benzoxazin-3-one (DIMBOA) and 2,4-dihydroxy-1,4-benzoxazin-3-one (DIBOA) that, due to their inherent instability once released, spontaneously degrade to the more stable corresponding benzoxazolinones, 6-methoxy-2-benzoxazolinone (MBOA) and 2-benzoxazolinone (BOA), respectively. The first step in the detoxification of benzoxazolinones involves the hydrolysis of the cyclic ester bond of benzoxazolinones by the FDB1 cluster gamma-lactamase MBL1 to aminophenols. MBL1 is able to convert BOA into 2-aminophenol (2-AP), as well as MBOA into 5-methoxy-2-aminophenol (2-AMP). The FDB2 cluster N-malonyltransferase FDB2/NAT1 then metabolizes aminophenols via N-malonylation to non-toxic malonamic acids. FDB2/NAT1 converts 2-AP into N-(2-hydroxyphenyl) malonamic acid (HPMA) and 2-AMP into N-(2-hydroxy-4-methoxyphenyl) malonamic acid (HMPMA). The duplicated dienlactone hydrolases DLH1 and DLH2 may provide redundant function for hydrolyzing the lactone moiety in the BOA molecule. The roles of the amidases an other enzymes encoded by the 2 FDB clusters have not been identified so far. The polypeptide is FAD-dependent monooxygenase FVEG_08293 (Gibberella moniliformis (strain M3125 / FGSC 7600) (Maize ear and stalk rot fungus)).